Reading from the N-terminus, the 86-residue chain is Conotoxin S6.10 (86 aa).

The N-terminal stretch at 1-22 (MKLTCVLIIAVLFLTACQLATA) is a signal peptide. Positions 23–45 (KTYSKGRQKHRALRSTDKNIKLT) are excised as a propeptide. Cystine bridges form between C48-C62, C55-C66, and C61-C73.

Belongs to the conotoxin O1 superfamily. As to expression, expressed by the venom duct.

It is found in the secreted. The chain is Conotoxin S6.10 from Conus striatus (Striated cone).